We begin with the raw amino-acid sequence, 201 residues long: 3-isopropylmalate dehydratase small subunit (201 aa).

Belongs to the LeuD family. LeuD type 1 subfamily. As to quaternary structure, heterodimer of LeuC and LeuD.

It carries out the reaction (2R,3S)-3-isopropylmalate = (2S)-2-isopropylmalate. It functions in the pathway amino-acid biosynthesis; L-leucine biosynthesis; L-leucine from 3-methyl-2-oxobutanoate: step 2/4. Its function is as follows. Catalyzes the isomerization between 2-isopropylmalate and 3-isopropylmalate, via the formation of 2-isopropylmaleate. In Cronobacter sakazakii (strain ATCC BAA-894) (Enterobacter sakazakii), this protein is 3-isopropylmalate dehydratase small subunit.